A 347-amino-acid chain; its full sequence is MSVMFDPDTAIYPFPTKPTPLSIDEKAYYREKIKRLLKERNAVMVAHYYTDPEIQQLAEETGGCISDSLEMARFGAKHPASTLLVAGVRFMGETAKILSPEKTILMPTLQAECSLDLGCPVDQFNAFCDAHPDRTVVVYANTSAVVKARADWVVTSSIAVELIDHLDSLGEKIIWAPDKHLGRYVQKQTGADILCWQGTCIVHDEFKTQALTRLQKQYPDAAILVHPESPQAIVDMADAVGSTSQLIAAAKTLPHQRLIVATDRGIFYKMQQAVPDKELLEAPTAGEGATCRSCAHCPWMAMNGLQAIAEALEQEESNYEVHVDERLRERALVPLNRMLDFAATLRG.

Iminosuccinate-binding residues include His-47 and Ser-68. Cys-113 provides a ligand contact to [4Fe-4S] cluster. Iminosuccinate is bound by residues 139 to 141 (YAN) and Ser-156. Residue Cys-200 coordinates [4Fe-4S] cluster. Iminosuccinate-binding positions include 226–228 (HPE) and Thr-243. Residue Cys-297 coordinates [4Fe-4S] cluster.

The protein belongs to the quinolinate synthase family. Type 1 subfamily. [4Fe-4S] cluster serves as cofactor.

The protein localises to the cytoplasm. It catalyses the reaction iminosuccinate + dihydroxyacetone phosphate = quinolinate + phosphate + 2 H2O + H(+). It participates in cofactor biosynthesis; NAD(+) biosynthesis; quinolinate from iminoaspartate: step 1/1. Catalyzes the condensation of iminoaspartate with dihydroxyacetone phosphate to form quinolinate. The chain is Quinolinate synthase from Escherichia fergusonii (strain ATCC 35469 / DSM 13698 / CCUG 18766 / IAM 14443 / JCM 21226 / LMG 7866 / NBRC 102419 / NCTC 12128 / CDC 0568-73).